Reading from the N-terminus, the 276-residue chain is Small ribosomal subunit protein uS3 (276 aa).

Residues 39–110 (IRRETMKFLK…KINIKIKEIK (72 aa)) enclose the KH type-2 domain.

Belongs to the universal ribosomal protein uS3 family. In terms of assembly, part of the 30S ribosomal subunit. Forms a tight complex with proteins S10 and S14.

Its function is as follows. Binds the lower part of the 30S subunit head. Binds mRNA in the 70S ribosome, positioning it for translation. The chain is Small ribosomal subunit protein uS3 from Borrelia recurrentis (strain A1).